Consider the following 647-residue polypeptide: Threonine--tRNA ligase (647 aa).

Residues 1-61 form the TGS domain; it reads MIKITFPDGA…EEDGSIEIVT (61 aa). The segment at 240–538 is catalytic; it reads DHRKLGKELD…LIETYKGAFP (299 aa). Zn(2+) contacts are provided by cysteine 334, histidine 385, and histidine 515.

The protein belongs to the class-II aminoacyl-tRNA synthetase family. Homodimer. Requires Zn(2+) as cofactor.

The protein resides in the cytoplasm. The enzyme catalyses tRNA(Thr) + L-threonine + ATP = L-threonyl-tRNA(Thr) + AMP + diphosphate + H(+). In terms of biological role, catalyzes the attachment of threonine to tRNA(Thr) in a two-step reaction: L-threonine is first activated by ATP to form Thr-AMP and then transferred to the acceptor end of tRNA(Thr). Also edits incorrectly charged L-seryl-tRNA(Thr). The polypeptide is Threonine--tRNA ligase (Streptococcus pyogenes serotype M4 (strain MGAS10750)).